The primary structure comprises 842 residues: Probable vinculin (842 aa).

Residues 585–679 (KEARKRLDDV…AAEEEERKRA (95 aa)) adopt a coiled-coil conformation.

This sequence belongs to the vinculin/alpha-catenin family. As to quaternary structure, monomer. Associates with F-actin. Interacts with aarA, ctxA, ctxB and rgaA. Epithelium.

Its subcellular location is the cytoplasm. It is found in the cell cortex. It localises to the cell junction. In terms of biological role, involved in cell adhesion. Thought to play an important role in cytokinesis B, probably by providing substrate adhesion and traction forces. Required to organize and polarize the tip epithelium during cytokinesis. Required for the normal distribution of myosin in the tip epithelium. Involved in the localization of ctxA, ctxB, dcsA, exoc6 and rgaA. Thought to form a complex with ctxA, ctxB, and rgaA which regulates myosin accumulation to the apical plasma membrane. The chain is Probable vinculin (ctnnA) from Dictyostelium discoideum (Social amoeba).